Consider the following 918-residue polypeptide: MQKDGTRSSRRMEEGDRRNGSTGSSGSVSRELGRGFSYYNKYLARLQQNLRDTKRFFRDIKHTYSGAPGGPDTDIKGAEGDLGQLHSITFPRQEEEYLKLTVRCRPCIFILGQSCSSRGRVANSLLGDQLLPILTHCGSECCKRRRIRFRYGKQTLVSLALPEQYELVHELVAHQGKWDTIPEEDLDVPEDEEDPAHRLAELEVTLPHQLLQDVDIVVSPCRSSQAVSMTLEDYVDHVQSIVVYAVCEERLSQQDEEELTEIKEKYKLPVFFIRTSSTRDRLIGGSEGVRSALYEQLMELGFLKRGLCNCGAAGSGSTAPSMLVEQFEKLRQVSTFSRQVLQMHLVDAAIVLNMVHSRCLDLFINKAFDMHRDLQITPKRLEYTRQKENELYESLMRISDRKQEELKDMIVETLNSMREQLLEDAANMQFKDIAIPQNGEPVSVQEVKCCIFQIKELIISRLNQAVVNKLISSVDYLRESFVGTLERCLRSLEKSQQESSSHVTSNHLKQILNAAYHVEVTFNSGSTVTRMVWEQIVQIIQRITWVSPPTITPEWKRRVAQDAIESLSASKLAKSICSQFCKRLKSSHEAFAASLKQLEVGHSGRLEKTNDLWLRVRKDHAPRLARLSLESRSLQDVLLHGKPRIGRELGRGQYGVVYLCDSWGGHFPCALKSVVPPDEKHWNDLALEFHYMRSLPKHERLVDLHGSVIDYSYGGGSSIAVLLITERLHRDLYVGLKTGLSLETRLQIALDVVEGIRFLHNQGLVHRDIKLKNVLLDKKHRAKITDLGFCKPEAMMSGSIVGTPIHMAPELFSGKYDNSVDVYAFGILFWYICSGSVKLPEAFEKCASKDHLWNNVRKGARPERLAIFDEECWKLMEACWNGDPSQRPLMGIVQPMLQGIMDRLCRAQETGKALEDST.

Residues 1–19 (MQKDGTRSSRRMEEGDRRN) show a composition bias toward basic and acidic residues. The segment at 1-29 (MQKDGTRSSRRMEEGDRRNGSTGSSGSVS) is disordered. Residues 643–897 (PRIGRELGRG…PLMGIVQPML (255 aa)) enclose the Protein kinase domain. ATP-binding positions include 649–657 (LGRGQYGVV) and Lys-672. The Proton acceptor role is filled by Asp-768.

The protein belongs to the protein kinase superfamily. Ser/Thr protein kinase family.

The protein localises to the cytoplasm. It localises to the cell membrane. Its subcellular location is the apical cell membrane. The protein resides in the basolateral cell membrane. It is found in the cell junction. It carries out the reaction L-seryl-[protein] + ATP = O-phospho-L-seryl-[protein] + ADP + H(+). The enzyme catalyses L-threonyl-[protein] + ATP = O-phospho-L-threonyl-[protein] + ADP + H(+). It catalyses the reaction L-tyrosyl-[protein] + ATP = O-phospho-L-tyrosyl-[protein] + ADP + H(+). Functionally, may act as a positive regulator of ERK phosphorylation downstream of fibroblast growth factor-receptor activation. May induce both caspase-dependent apoptosis and caspase-independent cell death. May play a role in the embryonic development. This Xenopus tropicalis (Western clawed frog) protein is Dual serine/threonine and tyrosine protein kinase (dstyk).